The primary structure comprises 322 residues: NADH-quinone oxidoreductase subunit H (322 aa).

A run of 8 helical transmembrane segments spans residues 12–32 (VGKA…MSFI), 79–99 (IFIL…AVVP), 111–131 (VGLL…LFAG), 151–171 (LSYE…TGSF), 183–203 (LWNV…GVAV), 234–254 (FFVG…TLFF), 262–282 (LPPF…FILL), and 301–321 (VCLP…LINV).

The protein belongs to the complex I subunit 1 family. NDH-1 is composed of 14 different subunits. Subunits NuoA, H, J, K, L, M, N constitute the membrane sector of the complex.

It localises to the cell inner membrane. It carries out the reaction a quinone + NADH + 5 H(+)(in) = a quinol + NAD(+) + 4 H(+)(out). In terms of biological role, NDH-1 shuttles electrons from NADH, via FMN and iron-sulfur (Fe-S) centers, to quinones in the respiratory chain. The immediate electron acceptor for the enzyme in this species is believed to be ubiquinone. Couples the redox reaction to proton translocation (for every two electrons transferred, four hydrogen ions are translocated across the cytoplasmic membrane), and thus conserves the redox energy in a proton gradient. This subunit may bind ubiquinone. The chain is NADH-quinone oxidoreductase subunit H from Aeromonas salmonicida (strain A449).